We begin with the raw amino-acid sequence, 153 residues long: Aspartate carbamoyltransferase regulatory chain (153 aa).

Cys109, Cys114, Cys138, and Cys141 together coordinate Zn(2+).

It belongs to the PyrI family. As to quaternary structure, contains catalytic and regulatory chains. Requires Zn(2+) as cofactor.

Functionally, involved in allosteric regulation of aspartate carbamoyltransferase. The chain is Aspartate carbamoyltransferase regulatory chain from Enterobacter sp. (strain 638).